The chain runs to 318 residues: Probable metal transport system membrane protein CT_070 (318 aa).

Helical transmembrane passes span 1–21, 39–59, 64–84, 94–114, 124–144, 170–190, 196–216, 226–246, 252–272, and 285–305; these read MVAS…LVFF, IQVI…TFLV, AMYA…VCLF, QALT…IHFI, ASTA…LVFL, IFLV…SFVC, IFAF…MLLL, AVGV…AKLI, EMMV…PALS, and TSGL…VFVC.

The protein belongs to the ABC-3 integral membrane protein family.

It is found in the cell inner membrane. Its function is as follows. Part of an ATP-driven transport system CT_067/CT_068/CT_069/CT_070 for a metal. The polypeptide is Probable metal transport system membrane protein CT_070 (Chlamydia trachomatis serovar D (strain ATCC VR-885 / DSM 19411 / UW-3/Cx)).